Consider the following 793-residue polypeptide: Ent-copalyl diphosphate synthase, chloroplastic (793 aa).

The transit peptide at 1–47 (MPLASNPVAFLPSSTAHGDLPAAAFSRSSAGCLQLCRPLTPTSSLQC) directs the protein to the chloroplast. Residues Asp372 and Asp374 each coordinate Mg(2+). The short motif at 372–375 (DIDD) is the DXDD motif element.

It belongs to the terpene synthase family. Mg(2+) serves as cofactor.

It localises to the plastid. The protein resides in the chloroplast. The enzyme catalyses (2E,6E,10E)-geranylgeranyl diphosphate = ent-copalyl diphosphate. It functions in the pathway plant hormone biosynthesis; gibberellin biosynthesis. Functionally, catalyzes the conversion of geranylgeranyl diphosphate (GGPP) to the gibberellin precursor ent-copalyl diphosphate (CPP). The chain is Ent-copalyl diphosphate synthase, chloroplastic from Salvia miltiorrhiza (Chinese sage).